The following is a 481-amino-acid chain: Glutamate--tRNA ligase (481 aa).

The 'HIGH' region motif lies at 9-19 (PSPTGNLHIGT). Residues Cys-98, Cys-100, His-125, and Asp-127 each contribute to the Zn(2+) site. The short motif at 248 to 252 (KLSKR) is the 'KMSKS' region element. Lys-251 contacts ATP.

This sequence belongs to the class-I aminoacyl-tRNA synthetase family. Glutamate--tRNA ligase type 1 subfamily. Monomer. The cofactor is Zn(2+).

The protein localises to the cytoplasm. The enzyme catalyses tRNA(Glu) + L-glutamate + ATP = L-glutamyl-tRNA(Glu) + AMP + diphosphate. Catalyzes the attachment of glutamate to tRNA(Glu) in a two-step reaction: glutamate is first activated by ATP to form Glu-AMP and then transferred to the acceptor end of tRNA(Glu). The chain is Glutamate--tRNA ligase from Synechococcus elongatus (strain ATCC 33912 / PCC 7942 / FACHB-805) (Anacystis nidulans R2).